The following is a 346-amino-acid chain: 3 beta-hydroxysteroid dehydrogenase/Delta 5--&gt;4-isomerase (346 aa).

Tyrosine 147 acts as the Proton acceptor in catalysis. Lysine 151 is an NAD(+) binding site.

The protein belongs to the 3-beta-HSD family.

It catalyses the reaction a 3beta-hydroxy-Delta(5)-steroid + NAD(+) = a 3-oxo-Delta(5)-steroid + NADH + H(+). The catalysed reaction is a 3-oxo-Delta(5)-steroid = a 3-oxo-Delta(4)-steroid. The protein operates within lipid metabolism; steroid biosynthesis. Its function is as follows. Catalyzes the oxidative conversion of Delta(5)-ene-3-beta-hydroxy steroid, and the oxidative conversion of ketosteroids. The 3-beta-HSD enzymatic system plays a crucial role in the biosynthesis of all classes of hormonal steroids. During viral infection, steroid production contributes to virulence by inhibiting the host inflammatory response. This chain is 3 beta-hydroxysteroid dehydrogenase/Delta 5--&gt;4-isomerase (OPG174), found in Vaccinia virus (strain Western Reserve) (VACV).